The primary structure comprises 450 residues: Tryptophan dimethylallyltransferase 2 (450 aa).

L-tryptophan is bound by residues 80 to 81 (IL) and glutamate 89. The substrate site is built by arginine 100, lysine 186, and tyrosine 188. Residues tyrosine 190 and arginine 251 each coordinate L-tryptophan. Arginine 264, lysine 266, tyrosine 268, glutamine 350, tyrosine 352, tyrosine 416, and tyrosine 420 together coordinate substrate.

It belongs to the tryptophan dimethylallyltransferase family. Homodimer.

It carries out the reaction L-tryptophan + dimethylallyl diphosphate = 4-(3-methylbut-2-enyl)-L-tryptophan + diphosphate. Its pathway is alkaloid biosynthesis; ergot alkaloid biosynthesis. Catalyzes the first step of ergot alkaloid biosynthesis. Ergot alkaloids, which are produced by endophyte fungi, can enhance plant host fitness, but also cause livestock toxicosis to host plants. The chain is Tryptophan dimethylallyltransferase 2 (dmaW2) from Epichloe coenophiala (Tall fescue endophyte fungus).